Here is a 615-residue protein sequence, read N- to C-terminus: AP-1-like transcription factor yap1 (615 aa).

The segment covering 27 to 50 has biased composition (polar residues); sequence SSNNPTQKQQTVTHNSEANQNLNH. 2 disordered regions span residues 27–84 and 99–180; these read SSNN…EDSP and NESL…RKEK. The Bipartite nuclear localization signal motif lies at 35-42; it reads QQTVTHNS. The span at 52–67 shows a compositional bias: low complexity; sequence PGHASSGSFSVSPPSG. Positions 68-75 match the Bipartite nuclear localization signal motif; that stretch reads LDGSVNQS. Basic and acidic residues predominate over residues 118–147; sequence PGDKRKDIDGQVNDKEDSGKKRRESDEKAA. In terms of domain architecture, bZIP spans 157-220; that stretch reads SEPTSKRKAQ…ERLQLELKEY (64 aa). The tract at residues 162 to 183 is basic motif; the sequence is KRKAQNRAAQRAFRERKEKHLK. Positions 185–192 are leucine-zipper; it reads LEAKVEEL. The tract at residues 214–364 is transcription activation 1; the sequence is QLELKEYRKR…RGYQVNSSYS (151 aa). The segment covering 270-294 has biased composition (polar residues); it reads LFTNTQTSKSNQNKAKDNPTATPRS. The segment at 270–416 is disordered; the sequence is LFTNTQTSKS…AVKATESSTP (147 aa). The n-CRD stretch occupies residues 289–301; that stretch reads TATPRSEAQVPGV. The span at 310–321 shows a compositional bias: low complexity; sequence SSPNGLSNGPSP. Polar residues-rich tracts occupy residues 322-344 and 358-369; these read AKST…SGTL and QVNSSYSASTKQ. Residues 372–394 show a composition bias toward low complexity; sequence HDTPSSDSPSSSSDSHQSQLLSS. Residues 409-508 are transcription activation 2; sequence KATESSTPHA…SQDFGTFFDD (100 aa). Intrachain disulfides connect Cys-562-Cys-586, Cys-562-Cys-595, and Cys-586-Cys-595. The c-CRD stretch occupies residues 562-595; that stretch reads CNKIWDRLQSMEKFRNGEIDVDNLCSELRTKARC. Residues 580–587 carry the Nuclear export signal motif; the sequence is IDVDNLCS.

It belongs to the bZIP family. YAP subfamily. Post-translationally, depending on the oxidative stress inducing agent, yap1 can undergo two distinct conformational changes, both involving disulfide bond formation, and both masking the nuclear export signal, thus abolishing nuclear export.

It localises to the nucleus. Its subcellular location is the cytoplasm. Its function is as follows. Transcription activator involved in oxidative stress response and redox homeostasis. Regulates the transcription of genes encoding antioxidant enzymes and components of the cellular thiol-reducing pathways, including thioredoxin peroxidase (aspF3), cytochrome peroxidase, and the protein AFUA_3G00730, which appears to belong to the glutathione S-transferase family. Proteins of the protein degradation pathway are also regulated by yap1, as well the p-nitroreductase family protein AFUA_5G09910. May be involved in antifungal resistance to voriconazole. The chain is AP-1-like transcription factor yap1 from Aspergillus fumigatus (strain ATCC MYA-4609 / CBS 101355 / FGSC A1100 / Af293) (Neosartorya fumigata).